Consider the following 353-residue polypeptide: MDEAETDATENKRASEAKRASAMPPPPPPPPPISPPALIPAPAAGEEGPASLGQAGAAGCSRSRPPALEPERSLGRLRGRFEDYDEELEEEEEMEEEEEEEEEMSHFSLRLESGRADSEDEEERLINLVELTPYILCSICKGYLIDATTITECLHTFCKSCIVRHFYYSNRCPKCNIVVHQTQPLYNIRLDRQLQDIVYKLVINLEEREKKQMHDFYKERGLEVPKPAAPQPVPSSKGKTKKVLESVFRIPPELDMSLLLEFIGANEDTGHFKPLEKKFVRVSGEATIGHVEKFLRRKMGLDPACQVDIICGDHLLERYQTLREIRRAIGDTAMQDGLLVLHYGLVVSPLKIT.

The tract at residues 1 to 116 is disordered; that stretch reads MDEAETDATE…FSLRLESGRA (116 aa). Basic and acidic residues predominate over residues 9–19; sequence TENKRASEAKR. Pro residues predominate over residues 23–39; sequence MPPPPPPPPPISPPALI. At serine 34 the chain carries Phosphoserine. Residues 40-52 show a composition bias toward low complexity; it reads PAPAAGEEGPASL. Over residues 69–82 the composition is skewed to basic and acidic residues; the sequence is EPERSLGRLRGRFE. Positions 71-112 form a coiled coil; sequence ERSLGRLRGRFEDYDEELEEEEEMEEEEEEEEEMSHFSLRLE. Residues 83–103 show a composition bias toward acidic residues; it reads DYDEELEEEEEMEEEEEEEEE. Serine 118 carries the post-translational modification Phosphoserine. The RING-type zinc finger occupies 137–176; it reads CSICKGYLIDATTITECLHTFCKSCIVRHFYYSNRCPKCN. Residues lysine 226 and lysine 237 each participate in a glycyl lysine isopeptide (Lys-Gly) (interchain with G-Cter in SUMO2) cross-link.

Component of a PRC1-like complex. Interacts with BMI1/PCGF4, RING1 and RNF2. Interacts with KDM5D. Interacts with CBX4, CBX6, CBX7 and CBX8. In terms of processing, phosphorylated during mitosis. Expressed in ovary, testis, stomach, liver, thymus and kidney (at protein level).

The protein resides in the nucleus. In terms of biological role, transcriptional repressor. May modulate the levels of histone H3K4Me3 by activating KDM5D histone demethylase. Component of a Polycomb group (PcG) multiprotein PRC1-like complex, a complex class required to maintain the transcriptionally repressive state of many genes, including Hox genes, throughout development. PcG PRC1 complex acts via chromatin remodeling and modification of histones; it mediates monoubiquitination of histone H2A 'Lys-119', rendering chromatin heritably changed in its expressibility. Within the PRC1-like complex, regulates RNF2 ubiquitin ligase activity. This Mus musculus (Mouse) protein is Polycomb group RING finger protein 6 (Pcgf6).